We begin with the raw amino-acid sequence, 347 residues long: Protein RecA (347 aa).

Gly66 to Thr73 contacts ATP.

This sequence belongs to the RecA family.

The protein resides in the cytoplasm. In terms of biological role, can catalyze the hydrolysis of ATP in the presence of single-stranded DNA, the ATP-dependent uptake of single-stranded DNA by duplex DNA, and the ATP-dependent hybridization of homologous single-stranded DNAs. It interacts with LexA causing its activation and leading to its autocatalytic cleavage. In Allochromatium vinosum (Chromatium vinosum), this protein is Protein RecA.